We begin with the raw amino-acid sequence, 613 residues long: DBH-like monooxygenase protein 1 (613 aa).

The first 19 residues, 1 to 19 (MCGWPLLVLWALLPATAAG), serve as a signal peptide directing secretion. The Lumenal segment spans residues 20–587 (SPGRSYPHRV…PLVCEKAASP (568 aa)). One can recognise a DOMON domain in the interval 35 to 148 (GKYWLHWGRQ…STVRVIWAYH (114 aa)). Asn-114 is a glycosylation site (N-linked (GlcNAc...) asparagine). Tyr-203 is an active-site residue. 2 disulfides stabilise this stretch: Cys-205–Cys-257 and Cys-242–Cys-269. Cu cation-binding residues include His-235 and His-236. Asn-247 carries an N-linked (GlcNAc...) asparagine glycan. The Cu cation site is built by His-307, His-389, His-391, and Met-464. Intrachain disulfides connect Cys-364-Cys-480, Cys-368-Cys-550, and Cys-443-Cys-465. His-389 is an active-site residue. N-linked (GlcNAc...) asparagine glycosylation is found at Asn-476 and Asn-517. The chain crosses the membrane as a helical span at residues 588–608 (PLHGIFSLRLLTCALLLGSML).

The protein belongs to the copper type II ascorbate-dependent monooxygenase family. Cu(2+) serves as cofactor. Post-translationally, N-glycosylated. Broadly exprressed, with highest levels in salivary gland and ovary.

The protein resides in the endoplasmic reticulum membrane. This Mus musculus (Mouse) protein is DBH-like monooxygenase protein 1 (Moxd1).